The sequence spans 296 residues: Nitrogenase iron protein 2 (296 aa).

An ATP-binding site is contributed by 11-18 (GKGGIGKS). C99 lines the [4Fe-4S] cluster pocket. The residue at position 102 (R102) is an ADP-ribosylarginine; by dinitrogenase reductase ADP-ribosyltransferase. Residue C133 coordinates [4Fe-4S] cluster.

It belongs to the NifH/BchL/ChlL family. As to quaternary structure, homodimer. [4Fe-4S] cluster serves as cofactor. Post-translationally, the reversible ADP-ribosylation of Arg-102 inactivates the nitrogenase reductase and regulates nitrogenase activity.

The enzyme catalyses N2 + 8 reduced [2Fe-2S]-[ferredoxin] + 16 ATP + 16 H2O = H2 + 8 oxidized [2Fe-2S]-[ferredoxin] + 2 NH4(+) + 16 ADP + 16 phosphate + 6 H(+). In terms of biological role, the key enzymatic reactions in nitrogen fixation are catalyzed by the nitrogenase complex, which has 2 components: the iron protein and the molybdenum-iron protein. This is Nitrogenase iron protein 2 (nifH2) from Azorhizobium caulinodans (strain ATCC 43989 / DSM 5975 / JCM 20966 / LMG 6465 / NBRC 14845 / NCIMB 13405 / ORS 571).